Here is a 284-residue protein sequence, read N- to C-terminus: Protein phosphatase 1 regulatory subunit 3B (284 aa).

A PP1-binding motif motif is present at residues arginine 61 to phenylalanine 64. The region spanning arginine 124–threonine 232 is the CBM21 domain. Serine 260 is modified (phosphoserine).

In terms of assembly, interacts with glycogen, PPP1CC catalytic subunit of PP1 and PYGL. Associates with glycogen particles. Forms complexes with debranching enzyme, glycogen phosphorylase, glycogen synthase and phosphorylase kinase which is necessary for its regulation of PP1 activity. In terms of tissue distribution, highly expressed in liver. Moderately expressed in kidney, heart, testis, spleen and lung. Weakly expressed in skeletal muscle (at protein level). Expressed predominantly in liver. Expressed moderately in heart. Expressed weakly in lung, kidney, spleen and skeletal muscle.

In terms of biological role, acts as a glycogen-targeting subunit for phosphatase PP1. Facilitates interaction of the PP1 with enzymes of the glycogen metabolism and regulates its activity. Suppresses the rate at which PP1 dephosphorylates (inactivates) glycogen phosphorylase and enhances the rate at which it activates glycogen synthase and therefore limits glycogen breakdown. Its activity is inhibited by PYGL, resulting in inhibition of the glycogen synthase and glycogen phosphorylase phosphatase activities of PP1. Dramatically increases basal and insulin-stimulated glycogen synthesis upon overexpression in hepatocytes. The protein is Protein phosphatase 1 regulatory subunit 3B (Ppp1r3b) of Rattus norvegicus (Rat).